The chain runs to 213 residues: Thiamine-phosphate synthase (213 aa).

4-amino-2-methyl-5-(diphosphooxymethyl)pyrimidine-binding positions include 40–44 and Asn72; that span reads QYRDK. Positions 73 and 91 each coordinate Mg(2+). Position 110 (Thr110) interacts with 4-amino-2-methyl-5-(diphosphooxymethyl)pyrimidine. Residue 137–139 participates in 2-[(2R,5Z)-2-carboxy-4-methylthiazol-5(2H)-ylidene]ethyl phosphate binding; it reads SHT. Residue Lys140 participates in 4-amino-2-methyl-5-(diphosphooxymethyl)pyrimidine binding. Gly167 is a binding site for 2-[(2R,5Z)-2-carboxy-4-methylthiazol-5(2H)-ylidene]ethyl phosphate.

The protein belongs to the thiamine-phosphate synthase family. Mg(2+) is required as a cofactor.

The catalysed reaction is 2-[(2R,5Z)-2-carboxy-4-methylthiazol-5(2H)-ylidene]ethyl phosphate + 4-amino-2-methyl-5-(diphosphooxymethyl)pyrimidine + 2 H(+) = thiamine phosphate + CO2 + diphosphate. The enzyme catalyses 2-(2-carboxy-4-methylthiazol-5-yl)ethyl phosphate + 4-amino-2-methyl-5-(diphosphooxymethyl)pyrimidine + 2 H(+) = thiamine phosphate + CO2 + diphosphate. It catalyses the reaction 4-methyl-5-(2-phosphooxyethyl)-thiazole + 4-amino-2-methyl-5-(diphosphooxymethyl)pyrimidine + H(+) = thiamine phosphate + diphosphate. It participates in cofactor biosynthesis; thiamine diphosphate biosynthesis; thiamine phosphate from 4-amino-2-methyl-5-diphosphomethylpyrimidine and 4-methyl-5-(2-phosphoethyl)-thiazole: step 1/1. Its function is as follows. Condenses 4-methyl-5-(beta-hydroxyethyl)thiazole monophosphate (THZ-P) and 2-methyl-4-amino-5-hydroxymethyl pyrimidine pyrophosphate (HMP-PP) to form thiamine monophosphate (TMP). The sequence is that of Thiamine-phosphate synthase from Stutzerimonas stutzeri (strain A1501) (Pseudomonas stutzeri).